Consider the following 219-residue polypeptide: Small ribosomal subunit protein uS3c (219 aa).

The 76-residue stretch at 43–118 (IKNYVQKNMK…KLNIAITRIA (76 aa)) folds into the KH type-2 domain.

It belongs to the universal ribosomal protein uS3 family. As to quaternary structure, part of the 30S ribosomal subunit.

It is found in the plastid. Its subcellular location is the chloroplast. The protein is Small ribosomal subunit protein uS3c (rps3) of Panax ginseng (Korean ginseng).